We begin with the raw amino-acid sequence, 498 residues long: Protein YhjJ (498 aa).

Positions 1–24 are cleaved as a signal peptide; sequence MQGTKIRLLAGGLLMMATAGYVQA.

This sequence belongs to the peptidase M16 family.

Its subcellular location is the periplasm. The chain is Protein YhjJ (yhjJ) from Escherichia coli (strain K12).